A 477-amino-acid chain; its full sequence is Ribulose bisphosphate carboxylase large chain (477 aa).

The propeptide occupies 1-2 (MS). Position 3 is an N-acetylproline (P3). K14 carries the N6,N6,N6-trimethyllysine modification. 2 residues coordinate substrate: N123 and T173. K175 acts as the Proton acceptor in catalysis. K177 contacts substrate. 3 residues coordinate Mg(2+): K201, D203, and E204. Residue K201 is modified to N6-carboxylysine. H294 serves as the catalytic Proton acceptor. 3 residues coordinate substrate: R295, H327, and S379.

The protein belongs to the RuBisCO large chain family. Type I subfamily. Heterohexadecamer of 8 large chains and 8 small chains; disulfide-linked. The disulfide link is formed within the large subunit homodimers. The cofactor is Mg(2+). In terms of processing, the disulfide bond which can form in the large chain dimeric partners within the hexadecamer appears to be associated with oxidative stress and protein turnover.

It localises to the plastid. Its subcellular location is the chloroplast. The enzyme catalyses 2 (2R)-3-phosphoglycerate + 2 H(+) = D-ribulose 1,5-bisphosphate + CO2 + H2O. It catalyses the reaction D-ribulose 1,5-bisphosphate + O2 = 2-phosphoglycolate + (2R)-3-phosphoglycerate + 2 H(+). Functionally, ruBisCO catalyzes two reactions: the carboxylation of D-ribulose 1,5-bisphosphate, the primary event in carbon dioxide fixation, as well as the oxidative fragmentation of the pentose substrate in the photorespiration process. Both reactions occur simultaneously and in competition at the same active site. This chain is Ribulose bisphosphate carboxylase large chain, found in Agrostis stolonifera (Creeping bentgrass).